The chain runs to 291 residues: NAD kinase (291 aa).

Aspartate 73 acts as the Proton acceptor in catalysis. Residues 73–74, 147–148, arginine 175, aspartate 177, and glutamine 246 contribute to the NAD(+) site; these read DG and ND.

This sequence belongs to the NAD kinase family. The cofactor is a divalent metal cation.

The protein localises to the cytoplasm. The catalysed reaction is NAD(+) + ATP = ADP + NADP(+) + H(+). Functionally, involved in the regulation of the intracellular balance of NAD and NADP, and is a key enzyme in the biosynthesis of NADP. Catalyzes specifically the phosphorylation on 2'-hydroxyl of the adenosine moiety of NAD to yield NADP. The polypeptide is NAD kinase (Laribacter hongkongensis (strain HLHK9)).